The chain runs to 288 residues: Acetyl-coenzyme A carboxylase carboxyl transferase subunit beta (288 aa).

The CoA carboxyltransferase N-terminal domain occupies 32–288 (LLLICPKCKK…ILMLHNVEAR (257 aa)). Zn(2+) contacts are provided by Cys36, Cys39, Cys55, and Cys58. A C4-type zinc finger spans residues 36–58 (CPKCKKTLLKSELADNLDVCREC).

It belongs to the AccD/PCCB family. Acetyl-CoA carboxylase is a heterohexamer composed of biotin carboxyl carrier protein (AccB), biotin carboxylase (AccC) and two subunits each of ACCase subunit alpha (AccA) and ACCase subunit beta (AccD). Zn(2+) is required as a cofactor.

The protein localises to the cytoplasm. The catalysed reaction is N(6)-carboxybiotinyl-L-lysyl-[protein] + acetyl-CoA = N(6)-biotinyl-L-lysyl-[protein] + malonyl-CoA. It participates in lipid metabolism; malonyl-CoA biosynthesis; malonyl-CoA from acetyl-CoA: step 1/1. Its function is as follows. Component of the acetyl coenzyme A carboxylase (ACC) complex. Biotin carboxylase (BC) catalyzes the carboxylation of biotin on its carrier protein (BCCP) and then the CO(2) group is transferred by the transcarboxylase to acetyl-CoA to form malonyl-CoA. The protein is Acetyl-coenzyme A carboxylase carboxyl transferase subunit beta of Ruminiclostridium cellulolyticum (strain ATCC 35319 / DSM 5812 / JCM 6584 / H10) (Clostridium cellulolyticum).